Reading from the N-terminus, the 31-residue chain is Cytochrome b6-f complex subunit 6 (31 aa).

The helical transmembrane segment at 4–24 (VVSYLGILAAFALVTIGIFLV) threads the bilayer.

It belongs to the PetL family. The 4 large subunits of the cytochrome b6-f complex are cytochrome b6, subunit IV (17 kDa polypeptide, PetD), cytochrome f and the Rieske protein, while the 4 small subunits are PetG, PetL, PetM and PetN. The complex functions as a dimer.

It is found in the plastid. The protein localises to the chloroplast thylakoid membrane. In terms of biological role, component of the cytochrome b6-f complex, which mediates electron transfer between photosystem II (PSII) and photosystem I (PSI), cyclic electron flow around PSI, and state transitions. PetL is important for photoautotrophic growth as well as for electron transfer efficiency and stability of the cytochrome b6-f complex. This chain is Cytochrome b6-f complex subunit 6, found in Mesostigma viride (Green alga).